We begin with the raw amino-acid sequence, 520 residues long: Putative thymidine phosphorylase 1 (520 aa).

This sequence belongs to the thymidine/pyrimidine-nucleoside phosphorylase family. Type 2 subfamily.

The catalysed reaction is thymidine + phosphate = 2-deoxy-alpha-D-ribose 1-phosphate + thymine. The polypeptide is Putative thymidine phosphorylase 1 (Cupriavidus necator (strain ATCC 17699 / DSM 428 / KCTC 22496 / NCIMB 10442 / H16 / Stanier 337) (Ralstonia eutropha)).